We begin with the raw amino-acid sequence, 176 residues long: Urease accessory protein UreE (176 aa).

The segment at 147–176 is disordered; sequence AGAYQQGGGHSHGHAHSHSHEKPHSHTHNH.

It belongs to the UreE family.

It is found in the cytoplasm. Involved in urease metallocenter assembly. Binds nickel. Probably functions as a nickel donor during metallocenter assembly. The sequence is that of Urease accessory protein UreE from Alcanivorax borkumensis (strain ATCC 700651 / DSM 11573 / NCIMB 13689 / SK2).